A 172-amino-acid polypeptide reads, in one-letter code: ATP synthase subunit b, chloroplastic (172 aa).

The chain crosses the membrane as a helical span at residues 15 to 37 (ILATNLINLSAVLGVLIFFGKGV).

Belongs to the ATPase B chain family. In terms of assembly, F-type ATPases have 2 components, F(1) - the catalytic core - and F(0) - the membrane proton channel. F(1) has five subunits: alpha(3), beta(3), gamma(1), delta(1), epsilon(1). F(0) has four main subunits: a(1), b(1), b'(1) and c(10-14). The alpha and beta chains form an alternating ring which encloses part of the gamma chain. F(1) is attached to F(0) by a central stalk formed by the gamma and epsilon chains, while a peripheral stalk is formed by the delta, b and b' chains.

It is found in the plastid. The protein localises to the chloroplast thylakoid membrane. Its function is as follows. F(1)F(0) ATP synthase produces ATP from ADP in the presence of a proton or sodium gradient. F-type ATPases consist of two structural domains, F(1) containing the extramembraneous catalytic core and F(0) containing the membrane proton channel, linked together by a central stalk and a peripheral stalk. During catalysis, ATP synthesis in the catalytic domain of F(1) is coupled via a rotary mechanism of the central stalk subunits to proton translocation. In terms of biological role, component of the F(0) channel, it forms part of the peripheral stalk, linking F(1) to F(0). This chain is ATP synthase subunit b, chloroplastic, found in Pisum sativum (Garden pea).